The sequence spans 576 residues: DNA primase (576 aa).

A CHC2-type zinc finger spans residues 40 to 64 (CPFHNEKTPSFNVVAKKQFYHCFGC). In terms of domain architecture, Toprim spans 251–333 (DSIIVVEGYM…GLDAGFIFLP (83 aa)). Residues E257, D301, and D303 each coordinate Mg(2+).

The protein belongs to the DnaG primase family. Monomer. Interacts with DnaB. The cofactor is Zn(2+). It depends on Mg(2+) as a cofactor.

It carries out the reaction ssDNA + n NTP = ssDNA/pppN(pN)n-1 hybrid + (n-1) diphosphate.. RNA polymerase that catalyzes the synthesis of short RNA molecules used as primers for DNA polymerase during DNA replication. The protein is DNA primase of Legionella pneumophila.